The sequence spans 432 residues: uncharacterized protein (432 aa).

The next 13 membrane-spanning stretches (helical) occupy residues 7–27 (FIGL…PDIY), 29–49 (GIVI…PLPV), 68–88 (EALT…FMLA), 124–144 (FLSM…IALG), 156–176 (FLLL…IIGS), 196–216 (VGFP…YIYF), 241–261 (LVIF…SEIF), 266–286 (FDSV…LVEV), 291–311 (KIDW…GVIV), 326–346 (ILGN…TIIL), 358–378 (IIVP…LILA), 379–399 (VGMS…NAIV), and 412–432 (IGMI…ILYL).

Belongs to the CitM (TC 2.A.11) transporter family.

Its subcellular location is the cell membrane. This is an uncharacterized protein from Methanocaldococcus jannaschii (strain ATCC 43067 / DSM 2661 / JAL-1 / JCM 10045 / NBRC 100440) (Methanococcus jannaschii).